We begin with the raw amino-acid sequence, 116 residues long: Large ribosomal subunit protein bL20 (116 aa).

It belongs to the bacterial ribosomal protein bL20 family.

In terms of biological role, binds directly to 23S ribosomal RNA and is necessary for the in vitro assembly process of the 50S ribosomal subunit. It is not involved in the protein synthesizing functions of that subunit. This Synechococcus elongatus (strain ATCC 33912 / PCC 7942 / FACHB-805) (Anacystis nidulans R2) protein is Large ribosomal subunit protein bL20.